A 960-amino-acid chain; its full sequence is Cyclin-dependent kinase-like 5 (960 aa).

The Protein kinase domain occupies 13–297 (FEILGVVGEG…TEQCLNHPTF (285 aa)). Residues 19–27 (VGEGAYGVV) and Lys42 contribute to the ATP site. Asp135 serves as the catalytic Proton acceptor. Disordered stretches follow at residues 300–349 (QRLL…IQNL), 382–566 (KTYQ…RHSK), 646–834 (SPQP…TQSQ), and 848–960 (ASNH…ETAL). 2 stretches are compositionally biased toward polar residues: residues 319–336 (ESST…TALQ) and 382–402 (KTYQ…NNNI). At Ser407 the chain carries Phosphoserine. Residues 407-417 (SPKEAKSKTEF) show a composition bias toward basic and acidic residues. 3 stretches are compositionally biased toward polar residues: residues 434-462 (LKSN…QPNE), 473-482 (IPQSSRSPSY), and 510-548 (EPST…SGRN). Ser479 is modified (phosphoserine). 2 stretches are compositionally biased toward basic and acidic residues: residues 549–559 (NRNEGTLDSRR) and 679–704 (QKSE…RHLY). Phosphoserine is present on Ser720. The span at 728–748 (HENNVSTRVSSLPSESSSGTN) shows a compositional bias: polar residues. The residue at position 761 (Ser761) is a Phosphoserine. A compositionally biased stretch (basic and acidic residues) spans 769-778 (EQLKEKEKQG). The segment covering 791 to 816 (QTVPNSDSPDLLTLQKSIHSASTPSS) has biased composition (polar residues). Positions 817–827 (RPKEWRPEKIS) are enriched in basic and acidic residues. Polar residues-rich tracts occupy residues 862–872 (LTAQQTKNSFS), 880–890 (SQASGGSSNIR), and 914–928 (SSVT…SYSE).

Belongs to the protein kinase superfamily. CMGC Ser/Thr protein kinase family. CDC2/CDKX subfamily. As to quaternary structure, interacts with MECP2. In terms of processing, autophosphorylated. As to expression, expressed in brain, lung, kidney, prostate, ovary, placenta, pancreas and testis. In terms of tissue distribution, predominant transcript in brain.

The protein resides in the nucleus. The protein localises to the cytoplasm. Its subcellular location is the cytoskeleton. It localises to the cilium basal body. It is found in the microtubule organizing center. The protein resides in the centrosome. It carries out the reaction L-seryl-[protein] + ATP = O-phospho-L-seryl-[protein] + ADP + H(+). The catalysed reaction is L-threonyl-[protein] + ATP = O-phospho-L-threonyl-[protein] + ADP + H(+). Mediates phosphorylation of MECP2. May regulate ciliogenesis. This chain is Cyclin-dependent kinase-like 5, found in Homo sapiens (Human).